Reading from the N-terminus, the 137-residue chain is MAWKRELTLAALNASSENTMVAHLGIIYTRLEAGLLEAEMPVDARTHQPFGLLHGGASAALAETLGSMAGWLMTEEGQCVVGTELNATHHRPVSSGKVRGECRPLHLGRQSQSWEIVVYDEKGRRCCTCRLGTAVLG.

Residue glutamate 63 is the Nucleophile or proton acceptor of the active site.

This sequence belongs to the thioesterase PaaI family. In terms of assembly, homotetramer. Dimer of dimers. Interacts specifically with the aryl carrier protein (ArCP) domain of EntB.

The protein resides in the cytoplasm. The protein operates within siderophore biosynthesis; enterobactin biosynthesis. Its function is as follows. Required for optimal enterobactin synthesis. Acts as a proofreading enzyme that prevents EntB misacylation by hydrolyzing the thioester bound existing between EntB and wrongly charged molecules. The polypeptide is Proofreading thioesterase EntH (entH) (Klebsiella pneumoniae subsp. pneumoniae (strain ATCC 700721 / MGH 78578)).